A 564-amino-acid chain; its full sequence is Phosphoinositide phospholipase C 3 (564 aa).

Positions 19–54 constitute an EF-hand domain; that stretch reads TRQPPVSIKRLFEAYSRNGKMSFDELLRFVSEVQGE. The PI-PLC X-box domain maps to 106–250; that stretch reads HDMKAPLSHY…LKGKILISTK (145 aa). Active-site residues include His-121 and His-167. The PI-PLC Y-box domain maps to 296 to 412; that stretch reads RDLIAIHAAN…GYVKKPRILL (117 aa). The region spanning 406-539 is the C2 domain; it reads KKPRILLDEH…KSGVRAVRLH (134 aa). 5 residues coordinate Ca(2+): Asp-450, Asp-456, Asp-509, Asp-511, and Asp-517.

Ca(2+) serves as cofactor. Expressed in leaves, roots and siliques, but not in flowers.

The protein resides in the cell membrane. The enzyme catalyses a 1,2-diacyl-sn-glycero-3-phospho-(1D-myo-inositol-4,5-bisphosphate) + H2O = 1D-myo-inositol 1,4,5-trisphosphate + a 1,2-diacyl-sn-glycerol + H(+). The production of the second messenger molecules diacylglycerol (DAG) and inositol 1,4,5-trisphosphate (IP3) is mediated by activated phosphatidylinositol-specific phospholipase C enzymes. This Arabidopsis thaliana (Mouse-ear cress) protein is Phosphoinositide phospholipase C 3 (PLC3).